Consider the following 627-residue polypeptide: Probable inactive L-type lectin-domain containing receptor kinase III.1 (627 aa).

A signal peptide spans 1 to 23; that stretch reads MITFKSIALTIIFLSYFVSCVSS. Residues 24–303 lie on the Extracellular side of the membrane; the sequence is QRETKFLNHG…STEKKSNNTM (280 aa). The legume-lectin like stretch occupies residues 26 to 262; it reads ETKFLNHGFL…SHFVLGWSFN (237 aa). 7 N-linked (GlcNAc...) asparagine glycosylation sites follow: Asn-57, Asn-78, Asn-127, Asn-184, Asn-202, Asn-209, and Asn-230. The tract at residues 272-297 is disordered; that stretch reads ITKLPSLPDPPPTLSPSPSPPVSTEK. A compositionally biased stretch (pro residues) spans 278 to 292; it reads LPDPPPTLSPSPSPP. Asn-300 carries N-linked (GlcNAc...) asparagine glycosylation. A helical membrane pass occupies residues 304 to 324; sequence LIIIVAASATVALMILIFSGF. Residues 325 to 627 lie on the Cytoplasmic side of the membrane; it reads WFLRRDKIFF…PHDDYLFYGV (303 aa). In terms of domain architecture, Protein kinase spans 353–623; that stretch reads FDNSKLLGER…TEALPHDDYL (271 aa). ATP contacts are provided by residues 359–367 and Lys-381; that span reads LGERNSGSF.

In the C-terminal section; belongs to the protein kinase superfamily. Ser/Thr protein kinase family. This sequence in the N-terminal section; belongs to the leguminous lectin family.

The protein localises to the cell membrane. The sequence is that of Probable inactive L-type lectin-domain containing receptor kinase III.1 (LECRK31) from Arabidopsis thaliana (Mouse-ear cress).